The chain runs to 366 residues: Peptide chain release factor 2 (366 aa).

Position 253 is an N5-methylglutamine (glutamine 253).

Belongs to the prokaryotic/mitochondrial release factor family. Methylated by PrmC. Methylation increases the termination efficiency of RF2.

It localises to the cytoplasm. Its function is as follows. Peptide chain release factor 2 directs the termination of translation in response to the peptide chain termination codons UGA and UAA. The chain is Peptide chain release factor 2 (prfB) from Buchnera aphidicola subsp. Baizongia pistaciae (strain Bp).